The sequence spans 544 residues: CTP synthase (544 aa).

The tract at residues 1–267 (MAKFVFITGG…AQRVLQILNL (267 aa)) is amidoligase domain. Ser-13 contributes to the CTP binding site. Ser-13 contributes to the UTP binding site. 14–19 (SIGKGI) provides a ligand contact to ATP. Tyr-54 contributes to the L-glutamine binding site. An ATP-binding site is contributed by Asp-71. Mg(2+) is bound by residues Asp-71 and Glu-141. CTP is bound by residues 148-150 (DIE), 188-193 (KTKPTQ), and Lys-224. UTP-binding positions include 188–193 (KTKPTQ) and Lys-224. The region spanning 292–534 (EIAIVGKYVR…IEAALRSRSR (243 aa)) is the Glutamine amidotransferase type-1 domain. Gly-354 contributes to the L-glutamine binding site. The Nucleophile; for glutamine hydrolysis role is filled by Cys-381. Residues 382–385 (LGMQ), Glu-405, and Arg-462 contribute to the L-glutamine site. Active-site residues include His-507 and Glu-509.

The protein belongs to the CTP synthase family. As to quaternary structure, homotetramer.

The catalysed reaction is UTP + L-glutamine + ATP + H2O = CTP + L-glutamate + ADP + phosphate + 2 H(+). It carries out the reaction L-glutamine + H2O = L-glutamate + NH4(+). It catalyses the reaction UTP + NH4(+) + ATP = CTP + ADP + phosphate + 2 H(+). Its pathway is pyrimidine metabolism; CTP biosynthesis via de novo pathway; CTP from UDP: step 2/2. Allosterically activated by GTP, when glutamine is the substrate; GTP has no effect on the reaction when ammonia is the substrate. The allosteric effector GTP functions by stabilizing the protein conformation that binds the tetrahedral intermediate(s) formed during glutamine hydrolysis. Inhibited by the product CTP, via allosteric rather than competitive inhibition. In terms of biological role, catalyzes the ATP-dependent amination of UTP to CTP with either L-glutamine or ammonia as the source of nitrogen. Regulates intracellular CTP levels through interactions with the four ribonucleotide triphosphates. The protein is CTP synthase of Synechococcus sp. (strain JA-3-3Ab) (Cyanobacteria bacterium Yellowstone A-Prime).